We begin with the raw amino-acid sequence, 65 residues long: Hirudin-3B (65 aa).

Positions 1-3 (VVY) are interaction with thrombin active site. 3 disulfide bridges follow: Cys6–Cys14, Cys16–Cys28, and Cys22–Cys39. Residues 40–65 (VTGEGTPKPQSHNDGDFEEIPEEYLQ) are disordered. A glycan (O-linked (GalNAc...) threonine) is linked at Thr45. The interval 55-65 (DFEEIPEEYLQ) is interaction with fibrinogen-binding exosite of thrombin. A compositionally biased stretch (acidic residues) spans 55 to 65 (DFEEIPEEYLQ). Tyr63 is subject to Sulfotyrosine.

Belongs to the protease inhibitor I14 (hirudin) family.

It is found in the secreted. Functionally, hirudin is a potent thrombin-specific protease inhibitor. It forms a stable non-covalent complex with alpha-thrombin, thereby abolishing its ability to cleave fibrinogen. The protein is Hirudin-3B of Hirudo medicinalis (Medicinal leech).